The following is a 407-amino-acid chain: MERAVKENHKPSNVKIFHPMTEGAKRIPVNQPQSTQFRPPGTAVSAQRILGPSNVPQRVLAQAQKPILSSQKPTTQIPLRPATQGHQSSKPQGPNENRNPQQTSHSSTPNVEKKGSTDQGKTSAVPKEEGKKKQWCLEDFEIGRPLGKGKFGNVYLARERESKFILALKVLFKSQLEKAGVEHQLRREVEIQSHLRHPNILRLYGYFHDASRVYLILDYAPGGELFRELQKCTRFDDQRSAMYIKQLAEALLYCHSKKVIHRDIKPENLLLGSNGELKIADFGWSVHAPSSRRTTLCGTLDYLPPEMIEGRMHDETVDLWSLGVLCYEFLVGKPPFETDTHQETYRRISKVEFQYPPYVSEEARDLVSKLLKHNPNHRLPLKGVLEHPWIIKNSQLKKKDEPLPGAQ.

Basic and acidic residues predominate over residues 1–10 (MERAVKENHK). The segment at 1-130 (MERAVKENHK…KTSAVPKEEG (130 aa)) is disordered. 2 stretches are compositionally biased toward polar residues: residues 67–77 (ILSSQKPTTQI) and 84–110 (QGHQSSKPQGPNENRNPQQTSHSSTPN). Positions 140–390 (FEIGRPLGKG…LKGVLEHPWI (251 aa)) constitute a Protein kinase domain. ATP-binding positions include lysine 150, lysine 169, and 217 to 220 (LDYA). Aspartate 263 acts as the Proton acceptor in catalysis. Aspartate 281 contacts ATP. The segment at 287–300 (HAPSSRRTTLCGTL) is activation segment.

Belongs to the protein kinase superfamily. Ser/Thr protein kinase family. Aurora subfamily. Interacts with kif2c and kif11. Phosphorylated. Autophosphorylated on a serine residue. Highly expressed in ovary and testis.

Its subcellular location is the cytoplasm. It localises to the cytoskeleton. The protein resides in the spindle. The protein localises to the microtubule organizing center. It is found in the centrosome. It catalyses the reaction L-seryl-[protein] + ATP = O-phospho-L-seryl-[protein] + ADP + H(+). The enzyme catalyses L-threonyl-[protein] + ATP = O-phospho-L-threonyl-[protein] + ADP + H(+). Mitotic serine/threonine kinases that contributes to the regulation of cell cycle progression. Associates with the centrosome and the spindle microtubules during mitosis and plays a critical role in various mitotic events including the establishment of mitotic spindle, centrosome duplication, centrosome separation as well as maturation, chromosomal alignment, spindle assembly checkpoint, and cytokinesis. Phosphorylates numerous target proteins. Important for microtubule formation and/or stabilization. In Xenopus laevis (African clawed frog), this protein is Aurora kinase A-A (aurka-a).